Here is a 239-residue protein sequence, read N- to C-terminus: Nicotinamide riboside transporter PnuC (239 aa).

Over 1-21 the chain is Cytoplasmic; it reads MDFFSVQNILVHIPIGAGGYD. The helical transmembrane segment at 22–42 threads the bilayer; that stretch reads LSWIEAVGTIAGLLCIGLASL. Residues 43 to 48 are Periplasmic-facing; it reads EKISNY. Residues 49–68 form a helical membrane-spanning segment; sequence FFGLINVTLFGIIFFQIQLY. Topologically, residues 69-71 are cytoplasmic; it reads ASL. The chain crosses the membrane as a helical span at residues 72–89; that stretch reads LLQVFFFAANIYGWYAWS. Topologically, residues 90–109 are periplasmic; it reads RQTSQNEAELKIRWLPLPKA. The helical transmembrane segment at 110–127 threads the bilayer; that stretch reads LSWLAVCVVSIGLMTVFI. Topologically, residues 128 to 157 are cytoplasmic; that stretch reads NPVFAFLTRVAVMIMQALGLQVVMPELQPD. The chain crosses the membrane as a helical span at residues 158 to 177; it reads AFPFWDSCMMVLSIVAMILM. At 178–183 the chain is on the periplasmic side; that stretch reads TRKYVE. The chain crosses the membrane as a helical span at residues 184–206; that stretch reads NWLLWVIINVISVVIFALQGVYA. Beta-nicotinamide D-riboside-binding residues include Trp188 and Asn192. The Cytoplasmic portion of the chain corresponds to 207 to 239; sequence MSLEYIILTFIALNGSRMWINSARERGSRALSH.

Belongs to the nicotinamide ribonucleoside (NR) uptake permease (TC 4.B.1) family.

The protein localises to the cell inner membrane. Required for nicotinamide riboside transport across the inner membrane. The sequence is that of Nicotinamide riboside transporter PnuC (pnuC) from Escherichia coli (strain K12).